The chain runs to 148 residues: Large ribosomal subunit protein uL15 (148 aa).

Positions 1-57 are disordered; sequence MRLNDVKPQKGSKKRRRRVGRGISAGQGASAGLGMRGQKSRSGSGTRPGFEGGQQPL. Basic residues predominate over residues 10 to 20; the sequence is KGSKKRRRRVG. The span at 23–35 shows a compositional bias: gly residues; sequence ISAGQGASAGLGM.

This sequence belongs to the universal ribosomal protein uL15 family. As to quaternary structure, part of the 50S ribosomal subunit.

In terms of biological role, binds to the 23S rRNA. The sequence is that of Large ribosomal subunit protein uL15 from Nostoc sp. (strain PCC 7120 / SAG 25.82 / UTEX 2576).